Here is a 268-residue protein sequence, read N- to C-terminus: Tryptophan synthase alpha chain (268 aa).

Active-site proton acceptor residues include E49 and D60.

The protein belongs to the TrpA family. As to quaternary structure, tetramer of two alpha and two beta chains.

The catalysed reaction is (1S,2R)-1-C-(indol-3-yl)glycerol 3-phosphate + L-serine = D-glyceraldehyde 3-phosphate + L-tryptophan + H2O. Its pathway is amino-acid biosynthesis; L-tryptophan biosynthesis; L-tryptophan from chorismate: step 5/5. In terms of biological role, the alpha subunit is responsible for the aldol cleavage of indoleglycerol phosphate to indole and glyceraldehyde 3-phosphate. This is Tryptophan synthase alpha chain from Yersinia pseudotuberculosis serotype O:1b (strain IP 31758).